Here is a 388-residue protein sequence, read N- to C-terminus: Succinate--CoA ligase [ADP-forming] subunit beta (388 aa).

One can recognise an ATP-grasp domain in the interval 9 to 245; it reads KALLKEYGMP…KSQENERELK (237 aa). ATP is bound by residues lysine 46, 53–55, glutamate 100, tyrosine 103, and glutamate 108; that span reads GRG. Asparagine 200 and aspartate 214 together coordinate Mg(2+). Substrate-binding positions include asparagine 265 and 322-324; that span reads GIV.

Belongs to the succinate/malate CoA ligase beta subunit family. In terms of assembly, heterotetramer of two alpha and two beta subunits. It depends on Mg(2+) as a cofactor.

The enzyme catalyses succinate + ATP + CoA = succinyl-CoA + ADP + phosphate. It catalyses the reaction GTP + succinate + CoA = succinyl-CoA + GDP + phosphate. The protein operates within carbohydrate metabolism; tricarboxylic acid cycle; succinate from succinyl-CoA (ligase route): step 1/1. Succinyl-CoA synthetase functions in the citric acid cycle (TCA), coupling the hydrolysis of succinyl-CoA to the synthesis of either ATP or GTP and thus represents the only step of substrate-level phosphorylation in the TCA. The beta subunit provides nucleotide specificity of the enzyme and binds the substrate succinate, while the binding sites for coenzyme A and phosphate are found in the alpha subunit. The chain is Succinate--CoA ligase [ADP-forming] subunit beta from Acinetobacter baumannii (strain AB307-0294).